The chain runs to 273 residues: Small ribosomal subunit protein uS2 (273 aa).

Residues Ser244 to Asn273 form a disordered region. Basic and acidic residues predominate over residues Asn255–Asn273.

It belongs to the universal ribosomal protein uS2 family.

This chain is Small ribosomal subunit protein uS2, found in Chlamydia felis (strain Fe/C-56) (Chlamydophila felis).